We begin with the raw amino-acid sequence, 266 residues long: 4-hydroxy-tetrahydrodipicolinate reductase (266 aa).

Residue 10-15 (GPRGRM) participates in NAD(+) binding. An NADP(+)-binding site is contributed by lysine 38. Residues 99–101 (GTT) and 125–128 (APNF) contribute to the NAD(+) site. Histidine 155 acts as the Proton donor/acceptor in catalysis. Histidine 156 serves as a coordination point for (S)-2,3,4,5-tetrahydrodipicolinate. Lysine 159 acts as the Proton donor in catalysis. 165-166 (GT) is a (S)-2,3,4,5-tetrahydrodipicolinate binding site.

The protein belongs to the DapB family.

The protein resides in the cytoplasm. The catalysed reaction is (S)-2,3,4,5-tetrahydrodipicolinate + NAD(+) + H2O = (2S,4S)-4-hydroxy-2,3,4,5-tetrahydrodipicolinate + NADH + H(+). The enzyme catalyses (S)-2,3,4,5-tetrahydrodipicolinate + NADP(+) + H2O = (2S,4S)-4-hydroxy-2,3,4,5-tetrahydrodipicolinate + NADPH + H(+). It functions in the pathway amino-acid biosynthesis; L-lysine biosynthesis via DAP pathway; (S)-tetrahydrodipicolinate from L-aspartate: step 4/4. Catalyzes the conversion of 4-hydroxy-tetrahydrodipicolinate (HTPA) to tetrahydrodipicolinate. In Bacillus mycoides (strain KBAB4) (Bacillus weihenstephanensis), this protein is 4-hydroxy-tetrahydrodipicolinate reductase.